The following is a 118-amino-acid chain: UPF0251 protein Teth39_0655 (118 aa).

It belongs to the UPF0251 family.

This chain is UPF0251 protein Teth39_0655, found in Thermoanaerobacter pseudethanolicus (strain ATCC 33223 / 39E) (Clostridium thermohydrosulfuricum).